The sequence spans 253 residues: MASVILYEYPFNERIRAYLRLEYLFDRLFFFAREGDARLHQIAVSSLFDLLDASERTDIKGAVLQDLERQRMALVGLRDHPGVAQDALEAMLRDMERVVAALAAQGKTGQALRENEWLVSLRGRLAVPGGATQVDMPSYHAWQNKPESVRCADLQSWLAPLLPLHEGLSMALRLLRESGRRADIAAEQGGYQQMLAGKIYHLLRVWVDPSLGVFPEISANKYMVWIRFSTQDGEVKPQQVSRDVAFQMSLCSS.

It belongs to the ZapD family. In terms of assembly, interacts with FtsZ.

The protein localises to the cytoplasm. Its function is as follows. Cell division factor that enhances FtsZ-ring assembly. Directly interacts with FtsZ and promotes bundling of FtsZ protofilaments, with a reduction in FtsZ GTPase activity. This is Cell division protein ZapD from Bordetella bronchiseptica (strain ATCC BAA-588 / NCTC 13252 / RB50) (Alcaligenes bronchisepticus).